Reading from the N-terminus, the 155-residue chain is MKMSDNKQALQVAALKNGTVIDHIPSDKLFTVVALLGLQDSDSNITIGNNFESKKLGKKGIIKVADRFFTDEEISRLSVVAPNVKLNIIRDYEVVEKKQVLMPEELRGIVKCANPKCITNNEPMTTLFHVIDKEHGILKCHYCEKEQSKEGIKLL.

Residues Cys-112, Cys-117, Cys-140, and Cys-143 each coordinate Zn(2+).

Belongs to the PyrI family. In terms of assembly, contains catalytic and regulatory chains. Requires Zn(2+) as cofactor.

Involved in allosteric regulation of aspartate carbamoyltransferase. The protein is Aspartate carbamoyltransferase regulatory chain of Phocaeicola vulgatus (strain ATCC 8482 / DSM 1447 / JCM 5826 / CCUG 4940 / NBRC 14291 / NCTC 11154) (Bacteroides vulgatus).